The primary structure comprises 155 residues: 3-hydroxyacyl-[acyl-carrier-protein] dehydratase FabZ (155 aa).

His59 is an active-site residue.

It belongs to the thioester dehydratase family. FabZ subfamily.

It localises to the cytoplasm. The enzyme catalyses a (3R)-hydroxyacyl-[ACP] = a (2E)-enoyl-[ACP] + H2O. Its function is as follows. Involved in unsaturated fatty acids biosynthesis. Catalyzes the dehydration of short chain beta-hydroxyacyl-ACPs and long chain saturated and unsaturated beta-hydroxyacyl-ACPs. This Bartonella henselae (strain ATCC 49882 / DSM 28221 / CCUG 30454 / Houston 1) (Rochalimaea henselae) protein is 3-hydroxyacyl-[acyl-carrier-protein] dehydratase FabZ.